The chain runs to 1028 residues: Isoleucine--tRNA ligase (1028 aa).

Positions 51–61 (PTANGRPHIGH) match the 'HIGH' region motif. A 'KMSKS' region motif is present at residues 591-595 (KMSKS). An ATP-binding site is contributed by Lys594.

It belongs to the class-I aminoacyl-tRNA synthetase family. IleS type 2 subfamily. Monomer. Zn(2+) is required as a cofactor.

It localises to the cytoplasm. The catalysed reaction is tRNA(Ile) + L-isoleucine + ATP = L-isoleucyl-tRNA(Ile) + AMP + diphosphate. Catalyzes the attachment of isoleucine to tRNA(Ile). As IleRS can inadvertently accommodate and process structurally similar amino acids such as valine, to avoid such errors it has two additional distinct tRNA(Ile)-dependent editing activities. One activity is designated as 'pretransfer' editing and involves the hydrolysis of activated Val-AMP. The other activity is designated 'posttransfer' editing and involves deacylation of mischarged Val-tRNA(Ile). The sequence is that of Isoleucine--tRNA ligase from Thermoplasma volcanium (strain ATCC 51530 / DSM 4299 / JCM 9571 / NBRC 15438 / GSS1).